Here is a 241-residue protein sequence, read N- to C-terminus: Uracil-DNA glycosylase (241 aa).

Asp-68 acts as the Proton acceptor in catalysis.

Belongs to the uracil-DNA glycosylase (UDG) superfamily. UNG family.

Its subcellular location is the cytoplasm. It carries out the reaction Hydrolyzes single-stranded DNA or mismatched double-stranded DNA and polynucleotides, releasing free uracil.. Its function is as follows. Excises uracil residues from the DNA which can arise as a result of misincorporation of dUMP residues by DNA polymerase or due to deamination of cytosine. The chain is Uracil-DNA glycosylase from Sinorhizobium medicae (strain WSM419) (Ensifer medicae).